Here is a 524-residue protein sequence, read N- to C-terminus: mRNA cap guanine-N(7) methyltransferase (524 aa).

Residues M1 to E155 form a disordered region. The span at N19–I40 shows a compositional bias: basic and acidic residues. Polar residues predominate over residues N68–N77. The segment covering K90–G99 has biased composition (basic and acidic residues). Positions S100–V112 are enriched in polar residues. Residues S214–L522 enclose the mRNA cap 0 methyltransferase domain. An mRNA-binding site is contributed by N223–N224. The S-adenosyl-L-methionine site is built by K227, C251, D273, D319, Q349, and Y354.

The protein belongs to the class I-like SAM-binding methyltransferase superfamily. mRNA cap 0 methyltransferase family.

The protein localises to the nucleus. The catalysed reaction is a 5'-end (5'-triphosphoguanosine)-ribonucleoside in mRNA + S-adenosyl-L-methionine = a 5'-end (N(7)-methyl 5'-triphosphoguanosine)-ribonucleoside in mRNA + S-adenosyl-L-homocysteine. In terms of biological role, responsible for methylating the 5'-cap structure of mRNAs. This Debaryomyces hansenii (strain ATCC 36239 / CBS 767 / BCRC 21394 / JCM 1990 / NBRC 0083 / IGC 2968) (Yeast) protein is mRNA cap guanine-N(7) methyltransferase (ABD1).